Here is a 328-residue protein sequence, read N- to C-terminus: dITP/XTP pyrophosphatase (328 aa).

Residues 1-129 (MSEKIYEYKD…ATSEQGFGDT (129 aa)) are unknown. Residues 130-324 (ILIATRNEGK…KLMEVFPAWQ (195 aa)) form an NTP pyrophosphatase region. 134–139 (TRNEGK) lines the substrate pocket. The active-site Proton acceptor is Asp-196. Asp-196 contributes to the Mg(2+) binding site. Substrate contacts are provided by residues Ser-197, 280-283 (FGYD), Lys-303, and 308-309 (HR).

This sequence belongs to the HAM1 NTPase family. In terms of assembly, homodimer. The cofactor is Mg(2+).

The enzyme catalyses XTP + H2O = XMP + diphosphate + H(+). It carries out the reaction dITP + H2O = dIMP + diphosphate + H(+). It catalyses the reaction ITP + H2O = IMP + diphosphate + H(+). In terms of biological role, pyrophosphatase that catalyzes the hydrolysis of nucleoside triphosphates to their monophosphate derivatives, with a high preference for the non-canonical purine nucleotides XTP (xanthosine triphosphate), dITP (deoxyinosine triphosphate) and ITP. Seems to function as a house-cleaning enzyme that removes non-canonical purine nucleotides from the nucleotide pool, thus preventing their incorporation into DNA/RNA and avoiding chromosomal lesions. This chain is dITP/XTP pyrophosphatase, found in Streptococcus pyogenes serotype M18 (strain MGAS8232).